The chain runs to 83 residues: ATP synthase subunit c (83 aa).

2 helical membrane passes run 10-30 (IAVALLIGMGALGTAIGFGLL) and 52-72 (MFIVAGLLDAVTMIGVGIALY).

Belongs to the ATPase C chain family. As to quaternary structure, F-type ATPases have 2 components, F(1) - the catalytic core - and F(0) - the membrane proton channel. F(1) has five subunits: alpha(3), beta(3), gamma(1), delta(1), epsilon(1). F(0) has three main subunits: a(1), b(2) and c(10-14). The alpha and beta chains form an alternating ring which encloses part of the gamma chain. F(1) is attached to F(0) by a central stalk formed by the gamma and epsilon chains, while a peripheral stalk is formed by the delta and b chains.

The protein resides in the cell inner membrane. Functionally, f(1)F(0) ATP synthase produces ATP from ADP in the presence of a proton or sodium gradient. F-type ATPases consist of two structural domains, F(1) containing the extramembraneous catalytic core and F(0) containing the membrane proton channel, linked together by a central stalk and a peripheral stalk. During catalysis, ATP synthesis in the catalytic domain of F(1) is coupled via a rotary mechanism of the central stalk subunits to proton translocation. Key component of the F(0) channel; it plays a direct role in translocation across the membrane. A homomeric c-ring of between 10-14 subunits forms the central stalk rotor element with the F(1) delta and epsilon subunits. This chain is ATP synthase subunit c, found in Shewanella denitrificans (strain OS217 / ATCC BAA-1090 / DSM 15013).